The primary structure comprises 255 residues: Geranylgeranylglyceryl phosphate synthase (255 aa).

Positions 34 and 64 each coordinate Mg(2+). Sn-glycerol 1-phosphate-binding positions include 182–188, 213–214, and 235–236; these read YLEAGSG, GG, and GN.

This sequence belongs to the GGGP/HepGP synthase family. Group II subfamily. It depends on Mg(2+) as a cofactor.

The protein localises to the cytoplasm. It catalyses the reaction sn-glycerol 1-phosphate + (2E,6E,10E)-geranylgeranyl diphosphate = sn-3-O-(geranylgeranyl)glycerol 1-phosphate + diphosphate. The protein operates within membrane lipid metabolism; glycerophospholipid metabolism. Its function is as follows. Prenyltransferase that catalyzes the transfer of the geranylgeranyl moiety of geranylgeranyl diphosphate (GGPP) to the C3 hydroxyl of sn-glycerol-1-phosphate (G1P). This reaction is the first ether-bond-formation step in the biosynthesis of archaeal membrane lipids. The sequence is that of Geranylgeranylglyceryl phosphate synthase from Saccharolobus islandicus (strain M.14.25 / Kamchatka #1) (Sulfolobus islandicus).